The following is a 289-amino-acid chain: Bis(5'-nucleosyl)-tetraphosphatase, symmetrical (289 aa).

The protein belongs to the Ap4A hydrolase family.

It catalyses the reaction P(1),P(4)-bis(5'-adenosyl) tetraphosphate + H2O = 2 ADP + 2 H(+). Its function is as follows. Hydrolyzes diadenosine 5',5'''-P1,P4-tetraphosphate to yield ADP. In Yersinia pseudotuberculosis serotype IB (strain PB1/+), this protein is Bis(5'-nucleosyl)-tetraphosphatase, symmetrical.